The primary structure comprises 181 residues: Large ribosomal subunit protein uL6 (181 aa).

This sequence belongs to the universal ribosomal protein uL6 family. In terms of assembly, part of the 50S ribosomal subunit.

In terms of biological role, this protein binds to the 23S rRNA, and is important in its secondary structure. It is located near the subunit interface in the base of the L7/L12 stalk, and near the tRNA binding site of the peptidyltransferase center. This chain is Large ribosomal subunit protein uL6, found in Synechococcus sp. (strain JA-3-3Ab) (Cyanobacteria bacterium Yellowstone A-Prime).